Here is a 673-residue protein sequence, read N- to C-terminus: ATP-binding cassette sub-family G member 8 (673 aa).

A compositionally biased stretch (basic and acidic residues) spans 1–11; the sequence is MAGKAAEERGL. Residues 1 to 25 form a disordered region; sequence MAGKAAEERGLPKGATPQDTSGLQD. At 1–416 the chain is on the cytoplasmic side; sequence MAGKAAEERG…ISNDFRDLPT (416 aa). In terms of domain architecture, ABC transporter spans 47–313; that stretch reads LEVRDLNYQV…FTAIGYPCPR (267 aa). The ABC transmembrane type-2 domain maps to 411–665; sequence FRDLPTLLIH…VLYYVSLRFI (255 aa). A helical membrane pass occupies residues 417 to 437; that stretch reads LLIHGAEACLMSMTIGFLYFG. Residues 438-447 lie on the Extracellular side of the membrane; sequence HGSIQLSFMD. Residues 448–468 traverse the membrane as a helical segment; the sequence is TAALLFMIGALIPFNVILDVI. Residues 469–497 lie on the Cytoplasmic side of the membrane; sequence SKCYSERAMLYYELEDGLYTTGPYFFAKI. A helical transmembrane segment spans residues 498-518; that stretch reads LGELPEHCAYIIIYGMPTYWL. The Extracellular portion of the chain corresponds to 519 to 527; sequence ANLRPGLQP. The helical transmembrane segment at 528-548 threads the bilayer; sequence FLLHFLLVWLVVFCCRIMALA. At 549-555 the chain is on the cytoplasmic side; sequence AAALLPT. Residues 556–576 traverse the membrane as a helical segment; it reads FHMASFFSNALYNSFYLAGGF. Residues 577 to 639 lie on the Extracellular side of the membrane; that stretch reads MINLSSLWTV…LSVMELDSYP (63 aa). N-linked (GlcNAc...) asparagine glycosylation is present at Asn-619. A helical transmembrane segment spans residues 640–660; it reads LYAIYLIVIGLSGGFMVLYYV. Residues 661–673 are Cytoplasmic-facing; sequence SLRFIKQKPSQDW.

This sequence belongs to the ABC transporter superfamily. ABCG family. Eye pigment precursor importer (TC 3.A.1.204) subfamily. In terms of assembly, heterodimer with ABCG8. Mg(2+) serves as cofactor. In terms of processing, N-glycosylated. As to expression, predominantly expressed in the liver. Low expression levels in the small intestine and colon. Very low levels in other tissues, including brain, heart and spleen.

The protein localises to the cell membrane. It localises to the apical cell membrane. The catalysed reaction is cholesterol(in) + ATP + H2O = cholesterol(out) + ADP + phosphate + H(+). The enzyme catalyses sitosterol(in) + ATP + H2O = sitosterol(out) + ADP + phosphate + H(+). With respect to regulation, the ATPase activity of the heterodimer is stimulated by cholate. Taurocholate, glycocholate, taurochenodeoxycholate, glycochenodeoxycholate and taurodeoxycholate also stimulate ATPase activity, but to a lower degree. Glycodeoxycholate has no significant effect on ATPase activity. ATPase activity is inhibited by vanadate and by berillium fluoride. ABCG5 and ABCG8 form an obligate heterodimer that mediates Mg(2+)- and ATP-dependent sterol transport across the cell membrane. Plays an essential role in the selective transport of the dietary cholesterol in and out of the enterocytes and in the selective sterol excretion by the liver into bile. Required for normal sterol homeostasis. The heterodimer with ABCG5 has ATPase activity. The chain is ATP-binding cassette sub-family G member 8 from Homo sapiens (Human).